Here is a 109-residue protein sequence, read N- to C-terminus: Small ribosomal subunit protein uS10 (109 aa).

Belongs to the universal ribosomal protein uS10 family. In terms of assembly, part of the 30S ribosomal subunit.

Involved in the binding of tRNA to the ribosomes. The chain is Small ribosomal subunit protein uS10 from Wolbachia pipientis wMel.